Reading from the N-terminus, the 373-residue chain is MSISFNLLHREINTRARLGKLKTPHGDIDTPIFMPVGTQATVKSMTPDELENIKAQIILSNTYHLYLRPGSSLIDEAGGLHNFMNWQKPILTDSGGFQVFSLSDLREIKEEGVYFRSHLDGSRHFISPEKAIQIQMELGADIIMAFDECPPYPSDYDYVARSLERTVRWARRCKKAHEREDQALFGIIQGGVYRDLRKQSVEALIDIGFPGYAIGGLSVGEEKEKMLEVLDFTVPLMPENKPRYLMGVGAPEDLVEGVIRGVDMFDCVLPTRIARHGTVFTSQGRLTVRNAGYERDFTPLDPECDCYVCKNYTRAYIRHLIKRKEILGVRLTTYHNLYFLLSLMEKIRGAIKEDALLEFRDEFLRKYLNKASI.

Asp-93 acts as the Proton acceptor in catalysis. Substrate-binding positions include Asp-93–Phe-97, Asp-147, Gln-189, and Gly-216. The segment at Gly-247 to Asp-253 is RNA binding. Asp-266 serves as the catalytic Nucleophile. The segment at Thr-271 to Arg-275 is RNA binding; important for wobble base 34 recognition. Zn(2+) is bound by residues Cys-304, Cys-306, Cys-309, and His-335.

Belongs to the queuine tRNA-ribosyltransferase family. Homodimer. Within each dimer, one monomer is responsible for RNA recognition and catalysis, while the other monomer binds to the replacement base PreQ1. The cofactor is Zn(2+).

The catalysed reaction is 7-aminomethyl-7-carbaguanine + guanosine(34) in tRNA = 7-aminomethyl-7-carbaguanosine(34) in tRNA + guanine. It participates in tRNA modification; tRNA-queuosine biosynthesis. Its function is as follows. Catalyzes the base-exchange of a guanine (G) residue with the queuine precursor 7-aminomethyl-7-deazaguanine (PreQ1) at position 34 (anticodon wobble position) in tRNAs with GU(N) anticodons (tRNA-Asp, -Asn, -His and -Tyr). Catalysis occurs through a double-displacement mechanism. The nucleophile active site attacks the C1' of nucleotide 34 to detach the guanine base from the RNA, forming a covalent enzyme-RNA intermediate. The proton acceptor active site deprotonates the incoming PreQ1, allowing a nucleophilic attack on the C1' of the ribose to form the product. After dissociation, two additional enzymatic reactions on the tRNA convert PreQ1 to queuine (Q), resulting in the hypermodified nucleoside queuosine (7-(((4,5-cis-dihydroxy-2-cyclopenten-1-yl)amino)methyl)-7-deazaguanosine). The sequence is that of Queuine tRNA-ribosyltransferase from Halothermothrix orenii (strain H 168 / OCM 544 / DSM 9562).